The following is a 337-amino-acid chain: Ornithine carbamoyltransferase, catabolic (337 aa).

Carbamoyl phosphate-binding positions include 57–60 (STRT), glutamine 84, arginine 108, and 135–138 (HPTQ). Residues asparagine 167, aspartate 231, and 235-236 (SM) contribute to the L-ornithine site. Residues 272–273 (CL) and arginine 317 each bind carbamoyl phosphate.

It belongs to the aspartate/ornithine carbamoyltransferase superfamily. OTCase family.

It localises to the cytoplasm. The enzyme catalyses carbamoyl phosphate + L-ornithine = L-citrulline + phosphate + H(+). It functions in the pathway amino-acid degradation; L-arginine degradation via ADI pathway; carbamoyl phosphate from L-arginine: step 2/2. In terms of biological role, reversibly catalyzes the transfer of the carbamoyl group from carbamoyl phosphate (CP) to the N(epsilon) atom of ornithine (ORN) to produce L-citrulline. The sequence is that of Ornithine carbamoyltransferase, catabolic (arcB) from Streptococcus agalactiae.